The primary structure comprises 690 residues: DNA ligase (690 aa).

NAD(+)-binding positions include 43–47, 92–93, and glutamate 129; these read DAEYD and SI. Lysine 131 functions as the N6-AMP-lysine intermediate in the catalytic mechanism. Positions 152, 188, 309, and 333 each coordinate NAD(+). 4 residues coordinate Zn(2+): cysteine 427, cysteine 430, cysteine 445, and cysteine 451. In terms of domain architecture, BRCT spans 610 to 690; that stretch reads VTPTPLSGKT…GLKELLDGHS (81 aa).

Belongs to the NAD-dependent DNA ligase family. LigA subfamily. It depends on Mg(2+) as a cofactor. The cofactor is Mn(2+).

It catalyses the reaction NAD(+) + (deoxyribonucleotide)n-3'-hydroxyl + 5'-phospho-(deoxyribonucleotide)m = (deoxyribonucleotide)n+m + AMP + beta-nicotinamide D-nucleotide.. Functionally, DNA ligase that catalyzes the formation of phosphodiester linkages between 5'-phosphoryl and 3'-hydroxyl groups in double-stranded DNA using NAD as a coenzyme and as the energy source for the reaction. It is essential for DNA replication and repair of damaged DNA. The sequence is that of DNA ligase from Albidiferax ferrireducens (strain ATCC BAA-621 / DSM 15236 / T118) (Rhodoferax ferrireducens).